Here is a 158-residue protein sequence, read N- to C-terminus: Transcription elongation factor GreA (158 aa).

The protein belongs to the GreA/GreB family.

Its function is as follows. Necessary for efficient RNA polymerase transcription elongation past template-encoded arresting sites. The arresting sites in DNA have the property of trapping a certain fraction of elongating RNA polymerases that pass through, resulting in locked ternary complexes. Cleavage of the nascent transcript by cleavage factors such as GreA or GreB allows the resumption of elongation from the new 3'terminus. GreA releases sequences of 2 to 3 nucleotides. The polypeptide is Transcription elongation factor GreA (Rhizobium etli (strain CIAT 652)).